Here is a 194-residue protein sequence, read N- to C-terminus: Probable GTP-binding protein EngB (194 aa).

Positions 23 to 194 (DKMEFAFVGR…LNFMEEKLNN (172 aa)) constitute an EngB-type G domain. GTP contacts are provided by residues 31-38 (GRSNVGKS), 58-62 (GRTQL), 76-79 (DLPG), 142-145 (TKID), and 173-175 (HSS). Positions 38 and 60 each coordinate Mg(2+).

It belongs to the TRAFAC class TrmE-Era-EngA-EngB-Septin-like GTPase superfamily. EngB GTPase family. It depends on Mg(2+) as a cofactor.

Necessary for normal cell division and for the maintenance of normal septation. The chain is Probable GTP-binding protein EngB from Fusobacterium nucleatum subsp. nucleatum (strain ATCC 25586 / DSM 15643 / BCRC 10681 / CIP 101130 / JCM 8532 / KCTC 2640 / LMG 13131 / VPI 4355).